We begin with the raw amino-acid sequence, 423 residues long: Gamma-glutamyl phosphate reductase (423 aa).

Belongs to the gamma-glutamyl phosphate reductase family.

The protein resides in the cytoplasm. It carries out the reaction L-glutamate 5-semialdehyde + phosphate + NADP(+) = L-glutamyl 5-phosphate + NADPH + H(+). The protein operates within amino-acid biosynthesis; L-proline biosynthesis; L-glutamate 5-semialdehyde from L-glutamate: step 2/2. Its function is as follows. Catalyzes the NADPH-dependent reduction of L-glutamate 5-phosphate into L-glutamate 5-semialdehyde and phosphate. The product spontaneously undergoes cyclization to form 1-pyrroline-5-carboxylate. This Burkholderia orbicola (strain AU 1054) protein is Gamma-glutamyl phosphate reductase.